A 351-amino-acid chain; its full sequence is GDSL esterase/lipase At3g14820 (351 aa).

Positions 1-22 are cleaved as a signal peptide; sequence MDLHLIGFLLWFFVVQVTTSSA. An N-linked (GlcNAc...) asparagine glycan is attached at asparagine 25. Serine 39 functions as the Nucleophile in the catalytic mechanism. Residues aspartate 325 and histidine 328 contribute to the active site.

This sequence belongs to the 'GDSL' lipolytic enzyme family.

It localises to the secreted. The protein is GDSL esterase/lipase At3g14820 of Arabidopsis thaliana (Mouse-ear cress).